Reading from the N-terminus, the 29-residue chain is L-serine dehydratase, beta chain (29 aa).

This sequence belongs to the iron-sulfur dependent L-serine dehydratase family. As to quaternary structure, heterodimer of an alpha chain and a beta chain. The cofactor is [4Fe-4S] cluster.

The enzyme catalyses L-serine = pyruvate + NH4(+). The protein operates within carbohydrate biosynthesis; gluconeogenesis. The protein is L-serine dehydratase, beta chain of Anaerotignum propionicum (Clostridium propionicum).